A 109-amino-acid chain; its full sequence is uncharacterized protein (109 aa).

Residues 1–25 (MKGIFLVVQLGFSIMVFLFLAAVNW) form the signal peptide. Residues 73 to 95 (YPVMSALMIISFLYVLAALFLLI) traverse the membrane as a helical segment.

The protein localises to the membrane. This is an uncharacterized protein from Bacillus subtilis (strain 168).